Consider the following 485-residue polypeptide: GTPase Der (485 aa).

EngA-type G domains follow at residues 3–167 (PTIA…PEPE) and 176–349 (PVFA…NAAM). GTP-binding positions include 9-16 (GRPNVGKS), 56-60 (DTGGF), 119-122 (NKGE), 182-189 (GRPNVGKS), 229-233 (DTAGV), and 294-297 (NKWD). Residues 350 to 434 (IKMPTPKITR…PLRIQYNVSE (85 aa)) form the KH-like domain. The disordered stretch occupies residues 435–485 (NPYENAEDKPKKKPLRRVSLSNRIEKREGRKEEKNRFKKKTKVSVKKQFSK). A compositionally biased stretch (basic and acidic residues) spans 457-469 (RIEKREGRKEEKN). The span at 470-485 (RFKKKTKVSVKKQFSK) shows a compositional bias: basic residues.

It belongs to the TRAFAC class TrmE-Era-EngA-EngB-Septin-like GTPase superfamily. EngA (Der) GTPase family. Associates with the 50S ribosomal subunit.

Functionally, GTPase that plays an essential role in the late steps of ribosome biogenesis. The polypeptide is GTPase Der (Neisseria meningitidis serogroup C / serotype 2a (strain ATCC 700532 / DSM 15464 / FAM18)).